Consider the following 368-residue polypeptide: CST complex subunit STN1 (368 aa).

The interaction with CTC1 stretch occupies residues 2-192; sequence AVSLGDDDAD…KCYDQPFKMP (191 aa). The OB DNA-binding region spans 58–162; sequence VDVLGIVVYK…EIKATSFYKV (105 aa). 2 winged helix-turn-helix (wHTH) regions span residues 201–295 and 296–368; these read AGGS…NVTE and QDKD…YIVL.

The protein belongs to the CTC1 family. As to quaternary structure, component of the CST complex.

It is found in the nucleus. It localises to the chromosome. The protein localises to the telomere. Its function is as follows. Component of the CST complex proposed to act as a specialized replication factor promoting DNA replication under conditions of replication stress or natural replication barriers such as the telomere duplex. The CST complex binds single-stranded DNA with high affinity in a sequence-independent manner, while isolated subunits bind DNA with low affinity by themselves. Initially the CST complex has been proposed to protect telomeres from DNA degradation. However, the CST complex has been shown to be involved in several aspects of telomere replication. The sequence is that of CST complex subunit STN1 from Danio rerio (Zebrafish).